A 321-amino-acid chain; its full sequence is Probable heme-iron transport system permease protein IsdF (321 aa).

Helical transmembrane passes span 9–29 (LLFLCLLVILIATAYISFVTG), 61–81 (ILIALMVGAMLAVSGALLQAA), 89–109 (ANIIGVSSGALIMRALCMLFI), 114–134 (FYLPLLSFIGGLIPFLIIILL), 143–163 (VSMILVGVALFVLLNGVLEIL), 179–199 (IWSDVYILAVSALLGLILTLL), 233–253 (VFLASATVAIVGQLAFLGIIV), 267–287 (LIPFSTVIGAWLLLVADLLGR), and 294–314 (EIPANAILMIVGGPMLIYLIC).

This sequence belongs to the binding-protein-dependent transport system permease family. FecCD subfamily.

The protein localises to the cell membrane. Functionally, part of the binding-protein-dependent transport system for heme-iron. Responsible for the translocation of the substrate across the membrane. This chain is Probable heme-iron transport system permease protein IsdF (isdF), found in Staphylococcus aureus (strain NCTC 8325 / PS 47).